A 270-amino-acid chain; its full sequence is Protein FAM110D (270 aa).

Residues 1–16 are compositionally biased toward low complexity; the sequence is MLLASPSTPSRGRTPS. 3 disordered regions span residues 1–83, 117–142, and 186–244; these read MLLA…RPDS, RDVASSSAGSSERPAAPGGWTAPQDA, and PQSW…QVSV. Residues 68–78 show a composition bias toward basic residues; it reads RPARRGSGRRL.

It belongs to the FAM110 family.

This Bos taurus (Bovine) protein is Protein FAM110D (FAM110D).